A 90-amino-acid chain; its full sequence is WAP four-disulfide core domain protein 12 (90 aa).

Positions 1–23 (MGSSSFLVLMVSLALVTLVAVEG) are cleaved as a signal peptide. A WAP domain is found at 27-74 (GIEKAGVCPADNVRCFKSDPPQCHTDQDCLGERKCCYLHCGFKCVIPV). 4 disulfide bridges follow: Cys-34/Cys-62, Cys-41/Cys-66, Cys-49/Cys-61, and Cys-55/Cys-70.

It localises to the secreted. Antibacterial protein. Putative acid-stable proteinase inhibitor. The polypeptide is WAP four-disulfide core domain protein 12 (WFDC12) (Gorilla gorilla gorilla (Western lowland gorilla)).